The chain runs to 630 residues: Probable potassium transport system protein Kup 2 (630 aa).

The next 12 helical transmembrane spans lie at 17-37 (FWALTLGGVGVVFGDIGTSPL), 56-76 (VIVLGVLSLILWSLFIVVTAK), 108-128 (VFLMSLGVIGASMFIGDSMIT), 145-165 (PALEHYVVPLTVGILVVLFAF), 176-196 (AFGPVMIVWFSTLAVMGLIHI), 214-234 (FMLSHGMVGLVTIGAVFLAVT), 255-275 (WLFFVLPSLLINYFGQGALVL), 293-313 (FLVPLIVLATAATVIASQAVI), 345-365 (IYLPRVNMLLLIGVLMLVLLF), 375-395 (YGIAVSTTMVADGVMGFVVIW), 402-422 (PAAAAALIFPFVAVDAIFFSA), and 427-447 (LLEGAWVPLLFGLLMATLIWV).

It belongs to the HAK/KUP transporter (TC 2.A.72) family.

The protein localises to the cell inner membrane. It carries out the reaction K(+)(in) + H(+)(in) = K(+)(out) + H(+)(out). In terms of biological role, transport of potassium into the cell. Likely operates as a K(+):H(+) symporter. The protein is Probable potassium transport system protein Kup 2 of Rhodopseudomonas palustris (strain BisB18).